The primary structure comprises 226 residues: Adenosine 5'-phosphosulfate reductase (226 aa).

[4Fe-4S] cluster is bound by residues cysteine 112, cysteine 113, cysteine 195, and cysteine 198. Cysteine 221 serves as the catalytic Nucleophile; cysteine thiosulfonate intermediate.

It belongs to the PAPS reductase family. CysH subfamily. [4Fe-4S] cluster is required as a cofactor.

It is found in the cytoplasm. It carries out the reaction [thioredoxin]-disulfide + sulfite + AMP + 2 H(+) = adenosine 5'-phosphosulfate + [thioredoxin]-dithiol. Its pathway is sulfur metabolism; hydrogen sulfide biosynthesis; sulfite from sulfate. Catalyzes the formation of sulfite from adenosine 5'-phosphosulfate (APS) using thioredoxin as an electron donor. This chain is Adenosine 5'-phosphosulfate reductase, found in Bacillus anthracis (strain A0248).